The chain runs to 375 residues: MDATTPAQTVGVEIYLGPVWPAPSNSTPLALNLSLALREDAPGNLTGDLSEHQQYVIALFLSCLYTIFLFPIGFVGNILILVVNISFREKMTIPDLYFINLAAADLILVADSLIEVFNLDEQYYDIAVLCTFMSLFLQINMYSSVFFLTWMSFDRYLALAKAMRCGLFRTKHHARLSCGLIWMASVSATLVPFTAVHLRHTEEACFCFADVREVQWLEVTLGFIMPFAIIGLCYSLIVRALIRAHRHRGLRPRRQKALRMIFAVVLVFFICWLPENVFISVHLLQWTQPGDTPCKQSFRHAYPLTGHIVNLAAFSNSCLNPLIYSFLGETFRDKLRLYVEQKTSLPALNRFCHATLKAVIPDSTEQSEVRFSSAV.

M1 bears the N-acetylmethionine mark. The Extracellular portion of the chain corresponds to 1–62 (MDATTPAQTV…QQYVIALFLS (62 aa)). N-linked (GlcNAc...) asparagine glycosylation is found at N32 and N44. The chain crosses the membrane as a helical span at residues 63–84 (CLYTIFLFPIGFVGNILILVVN). The Cytoplasmic segment spans residues 85-96 (ISFREKMTIPDL). The chain crosses the membrane as a helical span at residues 97–120 (YFINLAAADLILVADSLIEVFNLD). Residues 121–132 (EQYYDIAVLCTF) lie on the Extracellular side of the membrane. Cysteines 130 and 207 form a disulfide. Residues 133–153 (MSLFLQINMYSSVFFLTWMSF) traverse the membrane as a helical segment. Residues 154–175 (DRYLALAKAMRCGLFRTKHHAR) are Cytoplasmic-facing. A helical transmembrane segment spans residues 176 to 194 (LSCGLIWMASVSATLVPFT). Residues 195–220 (AVHLRHTEEACFCFADVREVQWLEVT) are Extracellular-facing. Residues 221–236 (LGFIMPFAIIGLCYSL) form a helical membrane-spanning segment. Over 237–259 (IVRALIRAHRHRGLRPRRQKALR) the chain is Cytoplasmic. A helical transmembrane segment spans residues 260-280 (MIFAVVLVFFICWLPENVFIS). Residues 281–306 (VHLLQWTQPGDTPCKQSFRHAYPLTG) lie on the Extracellular side of the membrane. The helical transmembrane segment at 307–327 (HIVNLAAFSNSCLNPLIYSFL) threads the bilayer. The Cytoplasmic segment spans residues 328–375 (GETFRDKLRLYVEQKTSLPALNRFCHATLKAVIPDSTEQSEVRFSSAV).

The protein belongs to the G-protein coupled receptor 1 family. As to quaternary structure, interacts with RAMP3; the interaction confers proper subcellular localization and function in cardioprotection. Interacts with KRT7 and KRT8. Interacts with EGFR; the interaction increases after agonist-induced stimulation in cancer-associated fibroblasts (CAF). Interacts with EGFR and ESR1. Interacts (via C-terminus tail motif) with DLG4 (via N-terminus tandem pair of PDZ domains); the interaction is direct and induces the increase of GPER1 protein levels residing at the plasma membrane surface in a estradiol-independent manner. Homodimer. Heterodimer; heterodimerizes with other G-protein-coupled receptor (GPCRs) like CRHR1, HTR1A and PAQR8. Post-translationally, ubiquitinated; ubiquitination occurs at the plasma membrane and leads to proteasome-mediated degradation. N-glycosylated. As to expression, expressed in brain, heart, spleen, preadipocytes, mature adipocytes and primary hippocampal neurons. Expressed in neurons of the hippocampus, hypothalamic paraventricular nucleus (PVH), supraoptic nucleus (SON) and the median eminence. Expressed in the nucleus ambiguous (at protein level). Expressed in brain, pituitary gland, adrenal medulla, renal pelvis, ovary, endothelial cells, visceral fat tissues and islets of Langerhans.

It is found in the nucleus. It localises to the cytoplasm. The protein localises to the perinuclear region. Its subcellular location is the cytoskeleton. The protein resides in the cell membrane. It is found in the endoplasmic reticulum membrane. It localises to the golgi apparatus membrane. The protein localises to the cell projection. Its subcellular location is the dendrite. The protein resides in the cytoplasmic vesicle membrane. It is found in the early endosome. It localises to the recycling endosome. The protein localises to the golgi apparatus. Its subcellular location is the trans-Golgi network. The protein resides in the dendritic spine membrane. It is found in the axon. It localises to the postsynaptic density. The protein localises to the mitochondrion membrane. Its function is as follows. G-protein coupled estrogen receptor that binds to 17-beta-estradiol (E2) with high affinity, leading to rapid and transient activation of numerous intracellular signaling pathways. Stimulates cAMP production, calcium mobilization and tyrosine kinase Src inducing the release of heparin-bound epidermal growth factor (HB-EGF) and subsequent transactivation of the epidermal growth factor receptor (EGFR), activating downstream signaling pathways such as PI3K/Akt and ERK/MAPK. Mediates pleiotropic functions among others in the cardiovascular, endocrine, reproductive, immune and central nervous systems. Has a role in cardioprotection by reducing cardiac hypertrophy and perivascular fibrosis in a RAMP3-dependent manner. Regulates arterial blood pressure by stimulating vasodilation and reducing vascular smooth muscle and microvascular endothelial cell proliferation. Plays a role in blood glucose homeostasis contributing to the insulin secretion response by pancreatic beta cells. Triggers mitochondrial apoptosis during pachytene spermatocyte differentiation. Stimulates uterine epithelial cell proliferation. Enhances uterine contractility in response to oxytocin. Contributes to thymic atrophy by inducing apoptosis. Attenuates TNF-mediated endothelial expression of leukocyte adhesion molecules. Promotes neuritogenesis in developing hippocampal neurons. Plays a role in acute neuroprotection against NMDA-induced excitotoxic neuronal death. Increases firing activity and intracellular calcium oscillations in luteinizing hormone-releasing hormone (LHRH) neurons. Inhibits early osteoblast proliferation at growth plate during skeletal development. Inhibits mature adipocyte differentiation and lipid accumulation. Involved in the recruitment of beta-arrestin 2 ARRB2 at the plasma membrane in epithelial cells. Also functions as a receptor for aldosterone mediating rapid regulation of vascular contractibility through the PI3K/ERK signaling pathway. Involved in cancer progression regulation. Stimulates cancer-associated fibroblast (CAF) proliferation by a rapid genomic response through the EGFR/ERK transduction pathway. Associated with EGFR, may act as a transcription factor activating growth regulatory genes (c-fos, cyclin D1). Promotes integrin alpha-5/beta-1 and fibronectin (FN) matrix assembly in breast cancer cells. The chain is G-protein coupled estrogen receptor 1 (Gper1) from Mus musculus (Mouse).